The chain runs to 267 residues: C-type lectin domain family 12 member A (267 aa).

At Met1–Val43 the chain is on the cytoplasmic side. Positions Ile5–Leu10 match the ITIM motif motif. Residue Tyr7 is modified to Phosphotyrosine. Residues Leu44–Phe64 traverse the membrane as a helical; Signal-anchor for type II membrane protein segment. The Extracellular segment spans residues Tyr65–Arg267. Asn98 and Asn105 each carry an N-linked (GlcNAc...) asparagine glycan. 4 disulfides stabilise this stretch: Cys118-Cys130, Cys133-Cys144, Cys161-Cys246, and Cys225-Cys238. The region spanning Tyr140 to Glu247 is the C-type lectin domain. Asn165 carries an N-linked (GlcNAc...) asparagine glycan.

Homodimer; disulfide-linked. Interacts (when the ITIM motif is phosphorylated) with PTPN6 and PTPN11. Phosphorylated at Tyr-7 by SRC in the ITIM motif following ligand-binding, promoting recruitment of tyrosine-protein phosphatases PTPN6 and PTPN11. In terms of tissue distribution, mainly expressed in lymphoid tissues. Preferentially expressed in peripheral blood leukocytes; less frequent in thymus, spleen, heart, brain and lung; and undetectable in other tissues.

It localises to the cell membrane. Myeloid inhibitory C-type lectin receptor that acts as a negative regulator of myeloid cell activation. Myeloid cell inhibition is required to limit proinflammatory pathways and protect against excessive inflammation. Specifically recognizes and binds various structures, such as neutrophil extracellular traps (NETs) or monosodium urate crystals. Also acts as a pattern-recognition receptor for pathogen-associated molecules, such as plasmodium hemozoin or mycobacterial micolic acid. Ligand-binding induces phosphorylation of its ITIM motif, followed by recruitment of tyrosine-protein phosphatases PTPN6 and PTPN11, which counteract tyrosine-protein kinase SYK, thereby preventing myeloid cell activation. Acts as a pattern-recognition receptor for NETs in neutrophils: specifically recognizes DNA in NETs, leading to inhibit neutrophil activation and limit further NET formation. This regulation is essential for controlling key neutrophil responses and limit NET-mediated inflammatory conditions. Also recognizes dead cells by acting as a receptor for monosodium urate crystals, leading to down-regulate neutrophil activation. Binding to monosodium urate crystals also promotes the type I interferon response. Acts as an inhibitor of natural killer (NK) cell cytotoxicity. Also acts as an ihibitor of dendritic cell maturation in an IL10-dependent manner. The sequence is that of C-type lectin domain family 12 member A from Mus musculus (Mouse).